A 461-amino-acid polypeptide reads, in one-letter code: Probable Xaa-Pro aminopeptidase PEPP (461 aa).

Mn(2+)-binding residues include Asp-257, Asp-268, Glu-391, and Glu-431.

This sequence belongs to the peptidase M24B family. Mn(2+) serves as cofactor.

The catalysed reaction is Release of any N-terminal amino acid, including proline, that is linked to proline, even from a dipeptide or tripeptide.. Functionally, catalyzes the removal of a penultimate prolyl residue from the N-termini of peptides. This Colletotrichum graminicola (strain M1.001 / M2 / FGSC 10212) (Maize anthracnose fungus) protein is Probable Xaa-Pro aminopeptidase PEPP (PEPP).